The sequence spans 216 residues: Holliday junction branch migration complex subunit RuvA (216 aa).

The segment at 1–64 (MISFIKGVLI…EDAQQLYGFK (64 aa)) is domain I. The domain II stretch occupies residues 65–143 (SKVDKKVFQE…KMANEIYAQT (79 aa)). Positions 144–163 (SGTTTTSQDSQAQQAPTSVV) are flexible linker. The domain III stretch occupies residues 164–216 (LANSIFNESVDALLALGYKQKDAEKMARSAMGDATTAAEVIRKALQGSIKSKR).

It belongs to the RuvA family. Homotetramer. Forms an RuvA(8)-RuvB(12)-Holliday junction (HJ) complex. HJ DNA is sandwiched between 2 RuvA tetramers; dsDNA enters through RuvA and exits via RuvB. An RuvB hexamer assembles on each DNA strand where it exits the tetramer. Each RuvB hexamer is contacted by two RuvA subunits (via domain III) on 2 adjacent RuvB subunits; this complex drives branch migration. In the full resolvosome a probable DNA-RuvA(4)-RuvB(12)-RuvC(2) complex forms which resolves the HJ.

The protein resides in the cytoplasm. Its function is as follows. The RuvA-RuvB-RuvC complex processes Holliday junction (HJ) DNA during genetic recombination and DNA repair, while the RuvA-RuvB complex plays an important role in the rescue of blocked DNA replication forks via replication fork reversal (RFR). RuvA specifically binds to HJ cruciform DNA, conferring on it an open structure. The RuvB hexamer acts as an ATP-dependent pump, pulling dsDNA into and through the RuvAB complex. HJ branch migration allows RuvC to scan DNA until it finds its consensus sequence, where it cleaves and resolves the cruciform DNA. The chain is Holliday junction branch migration complex subunit RuvA from Francisella tularensis subsp. mediasiatica (strain FSC147).